We begin with the raw amino-acid sequence, 59 residues long: Preprotein translocase subunit SecG (59 aa).

Residues Met1 to Lys35 lie on the Cytoplasmic side of the membrane. Residues Val36–Pro56 traverse the membrane as a helical segment. Topologically, residues Pro57–Leu59 are extracellular.

It belongs to the SEC61-beta family. In terms of assembly, component of the protein translocase complex. Heterotrimer consisting of alpha (SecY), beta (SecG) and gamma (SecE) subunits. Can form oligomers of the heterotrimer.

The protein localises to the cell membrane. Functionally, involved in protein export. The function of the beta subunit is unknown, but it may be involved in stabilization of the trimeric complex. The polypeptide is Preprotein translocase subunit SecG (Sulfolobus acidocaldarius (strain ATCC 33909 / DSM 639 / JCM 8929 / NBRC 15157 / NCIMB 11770)).